The chain runs to 198 residues: Sorcin (198 aa).

4 consecutive EF-hand domains span residues 29-64 (GQTQ…SGIA), 70-103 (FNLE…AVLN), 100-135 (AVLN…MGFR), and 134-169 (FRLS…LRAL). The Ca(2+) site is built by Asp83, Asp85, Ser87, Thr89, Glu94, Asp113, Asp115, Ser117, Thr119, and Glu124.

Homodimer. Interacts with GCA, RYR2 and ANXA7. As to expression, detected in cardiac myocytes.

Its subcellular location is the cytoplasm. The protein resides in the sarcoplasmic reticulum membrane. Functionally, calcium-binding protein that modulates excitation-contraction coupling in the heart. Contributes to calcium homeostasis in the heart sarcoplasmic reticulum. Modulates the activity of RYR2 calcium channels. This is Sorcin (SRI) from Homo sapiens (Human).